Here is a 143-residue protein sequence, read N- to C-terminus: Endoribonuclease YbeY (143 aa).

Positions 109, 113, and 119 each coordinate Zn(2+).

This sequence belongs to the endoribonuclease YbeY family. Zn(2+) serves as cofactor.

The protein localises to the cytoplasm. Single strand-specific metallo-endoribonuclease involved in late-stage 70S ribosome quality control and in maturation of the 3' terminus of the 16S rRNA. In Carboxydothermus hydrogenoformans (strain ATCC BAA-161 / DSM 6008 / Z-2901), this protein is Endoribonuclease YbeY.